Consider the following 354-residue polypeptide: Kelch domain-containing protein 8B (354 aa).

Kelch repeat units lie at residues 1–31, 32–79, 81–127, 128–175, 176–222, 224–281, 282–329, and 331–354; these read MATG…FQDG, HLLV…VLGK, VLVV…ERDG, MVYA…LHGN, KIYV…MAEG, VFSL…SLGD, HVVA…QAGP, and LFAI…RDGV.

Its subcellular location is the cytoplasm. The protein localises to the midbody. Functionally, involved in pinching off the separated nuclei at the cleavage furrow and in cytokinesis. Required for mitotic integrity and maintenance of chromosomal stability. Protects cells against mitotic errors, centrosomal amplification, micronucleus formation and aneuploidy. Plays a key role of midbody function involving abscission of the daughter cells during cytokinesis and appropriate chromosomal and nuclear segregation into the daughter cells. This Bos taurus (Bovine) protein is Kelch domain-containing protein 8B (KLHDC8B).